Reading from the N-terminus, the 589-residue chain is Mini-chromosome maintenance complex-binding protein (589 aa).

The interval 163-211 (VDEEMTDSMDSSTLEAGRNGSPFKKMKVGEATSSASESQVPQTSGIPPA) is disordered. A compositionally biased stretch (polar residues) spans 193–207 (ATSSASESQVPQTSG).

It belongs to the MCMBP family. In terms of assembly, interacts with the MCM complex.

It localises to the nucleus. In terms of biological role, associated component of the MCM complex that acts as a regulator of DNA replication. Binds to the MCM complex during late S phase and may act by promoting the disassembly of the MCM complex from chromatin. Required for sister chromatid cohesion. This chain is Mini-chromosome maintenance complex-binding protein (ETG1), found in Arabidopsis thaliana (Mouse-ear cress).